A 208-amino-acid chain; its full sequence is Cell death-inducing p53-target protein 1 (208 aa).

Pro residues-rich tracts occupy residues 1–13 and 36–67; these read MSSE…PGGP and MQPP…PGFI. Residues 1 to 71 are disordered; sequence MSSEPPPPYP…PQPGFIPPHM (71 aa). Residues 122-206 form the LITAF domain; it reads ATTVTVLQGE…CKAYIYTYKR (85 aa). Zn(2+)-binding residues include C142 and C145. A membrane-binding amphipathic helix region spans residues 164-184; sequence LGFFCCFMGCDLGCCLIPCLI. Residues C194 and C197 each contribute to the Zn(2+) site.

The protein belongs to the CDIP1/LITAF family. Highly expressed in brain. Expressed at lower level in heart, skeletal muscle, kidney, pancreas and liver. Weakly or not expressed in placenta and lung.

The protein localises to the late endosome membrane. Its subcellular location is the lysosome membrane. In terms of biological role, acts as an important p53/TP53-apoptotic effector. Regulates TNF-alpha-mediated apoptosis in a p53/TP53-dependent manner. This Homo sapiens (Human) protein is Cell death-inducing p53-target protein 1 (CDIP1).